Here is a 303-residue protein sequence, read N- to C-terminus: NAC domain-containing protein 48 (303 aa).

Positions 9-159 (LPPGFRFHPT…DWVLCRIYNK (151 aa)) constitute an NAC domain.

As to quaternary structure, interacts with NAC071. As to expression, widely expressed.

It localises to the nucleus. Transcription activator that binds to the promoter of the stress response gene LEA19. Involved in tolerance to abiotic stresses. Transcription activator involved in response to abiotic and biotic stresses. Involved in drought and salt stress responses, and defense response to the rice blast fungus. Transcription activator involved tolerance to cold and salt stresses. Transcription activator involved in tolerance to drought stress. Targets directly and activates genes involved in membrane modification, nicotianamine (NA) biosynthesis, glutathione relocation, accumulation of phosphoadenosine phosphosulfate and glycosylation in roots. Controls root growth at early vegetative stage through chromatin modification and histone lysine deacytaltion by HDAC1. This chain is NAC domain-containing protein 48, found in Oryza sativa subsp. japonica (Rice).